The sequence spans 317 residues: Methionyl-tRNA formyltransferase (317 aa).

Residue 112 to 115 (SILP) participates in (6S)-5,6,7,8-tetrahydrofolate binding.

Belongs to the Fmt family.

It catalyses the reaction L-methionyl-tRNA(fMet) + (6R)-10-formyltetrahydrofolate = N-formyl-L-methionyl-tRNA(fMet) + (6S)-5,6,7,8-tetrahydrofolate + H(+). Functionally, attaches a formyl group to the free amino group of methionyl-tRNA(fMet). The formyl group appears to play a dual role in the initiator identity of N-formylmethionyl-tRNA by promoting its recognition by IF2 and preventing the misappropriation of this tRNA by the elongation apparatus. This chain is Methionyl-tRNA formyltransferase, found in Mannheimia succiniciproducens (strain KCTC 0769BP / MBEL55E).